Reading from the N-terminus, the 92-residue chain is Small ribosomal subunit protein uS19c (92 aa).

This sequence belongs to the universal ribosomal protein uS19 family.

The protein localises to the plastid. It localises to the chloroplast. Functionally, protein S19 forms a complex with S13 that binds strongly to the 16S ribosomal RNA. The chain is Small ribosomal subunit protein uS19c from Tupiella akineta (Green alga).